Here is a 344-residue protein sequence, read N- to C-terminus: MKGCKYGTHRVIEPKGSLPQPALKISNDMNIFSNEILIDVQALNVDSASFTQIEEEAGHDTKKIAAKILEIVGERGKMQNPVTGSGGMLIGTIEKIGEDLEGKIDLKVGDKIATLVSLSLTPLQIDEIIDIKPDIDRVEIKGKAILFESGIYAKLPTDMSETLALAALDVAGAPAQTAKLVKPGDSVLILGAAGKSGMMCCYEAKKRVGPTGRVVGLVRNEKSKAKLLEMGIVDDVIIASAQLPVEVLETSLAANNGNEYDISINCVNVENTEMSSILPIRNGGTVYFFSMATSFTKAALGAEGVGKDVDMIIGNGYTKGHAEITLQILRESEIVRTTFEKMYL.

The protein belongs to the KDD family. In terms of assembly, homodimer.

The enzyme catalyses (3S,5S)-3,5-diaminohexanoate + NAD(+) + H2O = (5S)-5-amino-3-oxohexanoate + NH4(+) + NADH + H(+). It functions in the pathway amino-acid degradation; L-lysine degradation via acetate pathway. Functionally, involved in the anaerobic fermentation of lysine. Catalyzes the oxidative deamination of L-erythro-3,5-diaminohexanoate (3,5-DAH) to 3-keto-5-aminohexanoate (KAH). The chain is L-erythro-3,5-diaminohexanoate dehydrogenase from Acetoanaerobium sticklandii (strain ATCC 12662 / DSM 519 / JCM 1433 / CCUG 9281 / NCIMB 10654 / HF) (Clostridium sticklandii).